A 375-amino-acid polypeptide reads, in one-letter code: Anhydro-N-acetylmuramic acid kinase (375 aa).

ATP is bound at residue 18–25 (GTSMDGID).

Belongs to the anhydro-N-acetylmuramic acid kinase family.

It carries out the reaction 1,6-anhydro-N-acetyl-beta-muramate + ATP + H2O = N-acetyl-D-muramate 6-phosphate + ADP + H(+). It functions in the pathway amino-sugar metabolism; 1,6-anhydro-N-acetylmuramate degradation. The protein operates within cell wall biogenesis; peptidoglycan recycling. Functionally, catalyzes the specific phosphorylation of 1,6-anhydro-N-acetylmuramic acid (anhMurNAc) with the simultaneous cleavage of the 1,6-anhydro ring, generating MurNAc-6-P. Is required for the utilization of anhMurNAc either imported from the medium or derived from its own cell wall murein, and thus plays a role in cell wall recycling. The polypeptide is Anhydro-N-acetylmuramic acid kinase (Rhodospirillum rubrum (strain ATCC 11170 / ATH 1.1.1 / DSM 467 / LMG 4362 / NCIMB 8255 / S1)).